A 164-amino-acid chain; its full sequence is MRVLGIDPGIAIVGYSILDYDNNKIKCLEYGCITTSSKSALPDRLSFIYQEMNKIIDEFQPDDCAFEELFFNKNVKTAITVSQARGVEILSCINKDLRLYEYTPLQIKQAVVGYGRADKRQVQETVKTILKFNEIPKPDDAADAVAVALCHIFGSKFKYLNEMK.

Active-site residues include Asp7, Glu67, and Asp140. Residues Asp7, Glu67, and Asp140 each contribute to the Mg(2+) site.

This sequence belongs to the RuvC family. In terms of assembly, homodimer which binds Holliday junction (HJ) DNA. The HJ becomes 2-fold symmetrical on binding to RuvC with unstacked arms; it has a different conformation from HJ DNA in complex with RuvA. In the full resolvosome a probable DNA-RuvA(4)-RuvB(12)-RuvC(2) complex forms which resolves the HJ. Mg(2+) is required as a cofactor.

The protein resides in the cytoplasm. The enzyme catalyses Endonucleolytic cleavage at a junction such as a reciprocal single-stranded crossover between two homologous DNA duplexes (Holliday junction).. Its function is as follows. The RuvA-RuvB-RuvC complex processes Holliday junction (HJ) DNA during genetic recombination and DNA repair. Endonuclease that resolves HJ intermediates. Cleaves cruciform DNA by making single-stranded nicks across the HJ at symmetrical positions within the homologous arms, yielding a 5'-phosphate and a 3'-hydroxyl group; requires a central core of homology in the junction. The consensus cleavage sequence is 5'-(A/T)TT(C/G)-3'. Cleavage occurs on the 3'-side of the TT dinucleotide at the point of strand exchange. HJ branch migration catalyzed by RuvA-RuvB allows RuvC to scan DNA until it finds its consensus sequence, where it cleaves and resolves the cruciform DNA. This is Crossover junction endodeoxyribonuclease RuvC from Finegoldia magna (strain ATCC 29328 / DSM 20472 / WAL 2508) (Peptostreptococcus magnus).